The chain runs to 263 residues: Acyl-[acyl-carrier-protein]--UDP-N-acetylglucosamine O-acyltransferase (263 aa).

The protein belongs to the transferase hexapeptide repeat family. LpxA subfamily. As to quaternary structure, homotrimer.

The protein localises to the cytoplasm. The catalysed reaction is a (3R)-hydroxyacyl-[ACP] + UDP-N-acetyl-alpha-D-glucosamine = a UDP-3-O-[(3R)-3-hydroxyacyl]-N-acetyl-alpha-D-glucosamine + holo-[ACP]. Its pathway is glycolipid biosynthesis; lipid IV(A) biosynthesis; lipid IV(A) from (3R)-3-hydroxytetradecanoyl-[acyl-carrier-protein] and UDP-N-acetyl-alpha-D-glucosamine: step 1/6. Its function is as follows. Involved in the biosynthesis of lipid A, a phosphorylated glycolipid that anchors the lipopolysaccharide to the outer membrane of the cell. This is Acyl-[acyl-carrier-protein]--UDP-N-acetylglucosamine O-acyltransferase from Campylobacter jejuni (strain RM1221).